Here is a 435-residue protein sequence, read N- to C-terminus: UPF0597 protein ASA_0240 (435 aa).

The protein belongs to the UPF0597 family.

The chain is UPF0597 protein ASA_0240 from Aeromonas salmonicida (strain A449).